Consider the following 203-residue polypeptide: MSEHSNPELPPLPYDYDALEPHISEQVLTWHHDTHHQGYVNGLESAEETLAENRDAGDFGSSAAAMGNVTHNGCGHYLHTLFWENMDPNGGGEPEGELLDRIEEDFGSYEGWKGEFEAAASAAGGWALLVYDPVAKQLRNVPVDKHDQGALWGSHPILALDVWEHSYYYDYGPARGDFIDAFFEVVDWDKAAEEYEKSVSHFE.

Histidine 31, histidine 79, aspartate 161, and histidine 165 together coordinate Mn(2+).

The protein belongs to the iron/manganese superoxide dismutase family. It depends on Mn(2+) as a cofactor.

The enzyme catalyses 2 superoxide + 2 H(+) = H2O2 + O2. In terms of biological role, destroys superoxide anion radicals which are normally produced within the cells and which are toxic to biological systems. The polypeptide is Superoxide dismutase [Mn] (sod) (Haloarcula marismortui (strain ATCC 43049 / DSM 3752 / JCM 8966 / VKM B-1809) (Halobacterium marismortui)).